We begin with the raw amino-acid sequence, 89 residues long: Small ribosomal subunit protein uS14A (89 aa).

It belongs to the universal ribosomal protein uS14 family. As to quaternary structure, part of the 30S ribosomal subunit. Contacts proteins S3 and S10.

Its function is as follows. Binds 16S rRNA, required for the assembly of 30S particles and may also be responsible for determining the conformation of the 16S rRNA at the A site. This chain is Small ribosomal subunit protein uS14A, found in Listeria monocytogenes serotype 4b (strain F2365).